The chain runs to 619 residues: MIAFTDIVGMDLAKQALMLLAVDPSLGGVVIPSTVGSGKSTLARAFADILPEGTPFVELPLNVTEDRLIGGVDLEATLASGQRVVQHGVLSKAHKGVLYVDSLSLLDSSAVSHIMDAMSRGAVIVEREGLSEVHPADFMLVGTYDPSDGEVRMGLLDRIGIIVPFTPVNDYRARKQIVSLVMGTRNEEDTQDELRMLRGIIGAAREQLHHVSITNEQIKGLIQTAISLGVEGNRVDIFAIRAALANAALGQRTEVDDEDLKLAVKLVLVPRATRMPEREPSEEEMQQEEPPPPEEQPEQEGEDENAPPDETDSDADEEQEETPDMIEELMMDAIETDLPENILNISLASKKKAKSGSRGEALNNKRGRFVRSQPGEIKSGKVALIPTLISAAPWQAARKAEKAKKGIKTGALVISTDDVKIKRFRDKSGTLFIFMVDASGSMALNRMRQAKGAVASLLQNAYVHRDQVSLISFRGKQAQVLLPPSQSVDRAKRELDVLPTGGGTPLASALLTGWETAKQARTKGITQIMFVMITDGRGNIPLAAAVDPAAAKAPKEELEKEVEALALSIQSDGIASIVVDTQMNYLSRGEAPKLAQKLGGRYFYLPNAKAEQIVEAALS.

33 to 40 (STVGSGKS) lines the ATP pocket. The segment at 273-321 (TRMPEREPSEEEMQQEEPPPPEEQPEQEGEDENAPPDETDSDADEEQEE) is disordered. The span at 280-321 (PSEEEMQQEEPPPPEEQPEQEGEDENAPPDETDSDADEEQEE) shows a compositional bias: acidic residues. Residues 431–619 (LFIFMVDASG…AEQIVEAALS (189 aa)) enclose the VWFA domain.

It belongs to the Mg-chelatase subunits D/I family.

It catalyses the reaction protoporphyrin IX + Mg(2+) + ATP + H2O = Mg-protoporphyrin IX + ADP + phosphate + 3 H(+). The protein operates within porphyrin-containing compound metabolism; bacteriochlorophyll biosynthesis. Involved in bacteriochlorophyll biosynthesis; introduces a magnesium ion into protoporphyrin IX to yield Mg-protoporphyrin IX. The sequence is that of Magnesium-chelatase 67 kDa subunit (bchD) from Chlorobaculum parvum (strain DSM 263 / NCIMB 8327) (Chlorobium vibrioforme subsp. thiosulfatophilum).